Here is a 303-residue protein sequence, read N- to C-terminus: Formylglycine-generating enzyme (303 aa).

Ca(2+) is bound by residues Asn188, Ile189, Asp202, Tyr204, Asn222, Val223, Gly225, and Val227. Cu(+)-binding residues include Cys269 and Cys274.

It belongs to the sulfatase-modifying factor family. The cofactor is Cu(+).

It catalyses the reaction L-cysteinyl-[sulfatase] + 2 a thiol + O2 = an organic disulfide + 3-oxo-L-alanyl-[sulfatase] + hydrogen sulfide + H2O + H(+). The protein operates within protein modification; sulfatase oxidation. Functionally, oxidase that catalyzes the conversion of cysteine to 3-oxoalanine on target proteins. 3-oxoalanine modification, which is also named formylglycine (fGly), occurs in the maturation of arylsulfatases and some alkaline phosphatases that use the hydrated form of 3-oxoalanine as a catalytic nucleophile. The chain is Formylglycine-generating enzyme from Thermomonospora curvata (strain ATCC 19995 / DSM 43183 / JCM 3096 / KCTC 9072 / NBRC 15933 / NCIMB 10081 / Henssen B9).